We begin with the raw amino-acid sequence, 494 residues long: Autocrine proliferation repressor protein A (494 aa).

Positions 1 to 18 are cleaved as a signal peptide; it reads MSKLLILLLLSLVASIFS. N-linked (GlcNAc...) asparagine glycosylation is found at Asn-37, Asn-153, and Asn-302.

Belongs to the pqaA family. Interacts with cfaD.

Its subcellular location is the secreted. Its function is as follows. Inhibitor that slows proliferation of secreting cells (also known as chalone). May function by binding to cell surface receptors. Requires cfaD for activity. Overexpression slows proliferation. In Dictyostelium discoideum (Social amoeba), this protein is Autocrine proliferation repressor protein A (aprA).